We begin with the raw amino-acid sequence, 213 residues long: Probable chemoreceptor glutamine deamidase CheD (213 aa).

The segment covering 1 to 12 (MNRHRPHSHRSK) has biased composition (basic residues). Residues 1-25 (MNRHRPHSHRSKPASTQDQPDSVRR) form a disordered region.

It belongs to the CheD family.

It carries out the reaction L-glutaminyl-[protein] + H2O = L-glutamyl-[protein] + NH4(+). Probably deamidates glutamine residues to glutamate on methyl-accepting chemotaxis receptors (MCPs), playing an important role in chemotaxis. This is Probable chemoreceptor glutamine deamidase CheD from Rhodopseudomonas palustris (strain BisA53).